A 602-amino-acid chain; its full sequence is GTP-binding protein 2 (602 aa).

Residues 16–64 (GGGPAVGGTLKARGAGSSSGCGGPKGKKKNGRNRGGKANNPPYLPPEAE) form a disordered region. Basic residues predominate over residues 40 to 50 (KGKKKNGRNRG). The 229-residue stretch at 170-398 (FLDLRVAVLG…LNILPPLTNS (229 aa)) folds into the tr-type G domain. Residues 179–186 (GNVDSGKS), 260–264 (DLAGH), and 316–319 (SKID) each bind GTP.

Belongs to the TRAFAC class translation factor GTPase superfamily. Classic translation factor GTPase family. GTPBP1 subfamily. As to expression, predominantly expressed in thymus, spleen, and testis. Expressed at lower levels in brain, lung, kidney, and ovary.

The protein is GTP-binding protein 2 of Homo sapiens (Human).